The chain runs to 607 residues: Cytosolic Fe-S cluster assembly factor NAR1 (607 aa).

The [4Fe-4S] cluster site is built by cysteine 20, cysteine 82, cysteine 85, cysteine 88, cysteine 204, and cysteine 259. Positions 430-476 (KPNTGKSTNTTTTTTKSKVNPLAARRRARIANNRGKPETKSTSEVNS) are disordered. Positions 432-447 (NTGKSTNTTTTTTKSK) are enriched in low complexity. Residues cysteine 496 and cysteine 500 each coordinate [4Fe-4S] cluster.

Belongs to the NARF family.

Component of the cytosolic Fe/S protein assembly machinery. Required for maturation of extramitochondrial Fe/S proteins. May play a role in the transfer of pre-assembled Fe/S clusters to target apoproteins. In Candida albicans (strain SC5314 / ATCC MYA-2876) (Yeast), this protein is Cytosolic Fe-S cluster assembly factor NAR1 (NAR1).